Here is a 525-residue protein sequence, read N- to C-terminus: Endoglucanase 10 (525 aa).

A signal peptide spans 1–26; it reads MEEKSKSRGWCGWFIAIIVLASVILA. The Nucleophile role is filled by aspartate 109. N-linked (GlcNAc...) asparagine glycosylation occurs at asparagine 259. Histidine 442 is a catalytic residue. Residues asparagine 464 and asparagine 484 are each glycosylated (N-linked (GlcNAc...) asparagine). Active-site residues include aspartate 489 and glutamate 498.

This sequence belongs to the glycosyl hydrolase 9 (cellulase E) family.

The protein resides in the secreted. It carries out the reaction Endohydrolysis of (1-&gt;4)-beta-D-glucosidic linkages in cellulose, lichenin and cereal beta-D-glucans.. In Arabidopsis thaliana (Mouse-ear cress), this protein is Endoglucanase 10.